The following is a 154-amino-acid chain: 3-hydroxyacyl-[acyl-carrier-protein] dehydratase FabZ (154 aa).

Histidine 54 is an active-site residue.

Belongs to the thioester dehydratase family. FabZ subfamily.

It is found in the cytoplasm. It catalyses the reaction a (3R)-hydroxyacyl-[ACP] = a (2E)-enoyl-[ACP] + H2O. In terms of biological role, involved in unsaturated fatty acids biosynthesis. Catalyzes the dehydration of short chain beta-hydroxyacyl-ACPs and long chain saturated and unsaturated beta-hydroxyacyl-ACPs. This chain is 3-hydroxyacyl-[acyl-carrier-protein] dehydratase FabZ, found in Shewanella baltica (strain OS223).